The primary structure comprises 653 residues: Acetyl-coenzyme A synthetase (653 aa).

Residues 195 to 198 and Thr314 contribute to the CoA site; that span reads RGGK. Residues 390-392, 414-419, Asp505, and Arg520 contribute to the ATP site; these read GEP and DTWWQT. Residue Ser528 coordinates CoA. Residue Arg531 coordinates ATP. Residues Val542 and Val547 each coordinate Mg(2+). Lys617 bears the N6-acetyllysine mark.

This sequence belongs to the ATP-dependent AMP-binding enzyme family. The cofactor is Mg(2+). Acetylated. Deacetylation by the SIR2-homolog deacetylase activates the enzyme.

It carries out the reaction acetate + ATP + CoA = acetyl-CoA + AMP + diphosphate. Its function is as follows. Catalyzes the conversion of acetate into acetyl-CoA (AcCoA), an essential intermediate at the junction of anabolic and catabolic pathways. AcsA undergoes a two-step reaction. In the first half reaction, AcsA combines acetate with ATP to form acetyl-adenylate (AcAMP) intermediate. In the second half reaction, it can then transfer the acetyl group from AcAMP to the sulfhydryl group of CoA, forming the product AcCoA. This chain is Acetyl-coenzyme A synthetase, found in Pasteurella multocida (strain Pm70).